Reading from the N-terminus, the 605-residue chain is MGGCFSKPKPVELKIEVVLPEKERGKEELSASGKGSPRGYQGNGTARHFHAEERLPTPQPYPSPQDCVEATVCHVKDLENGQMREVELGWGKVLLVKDNGEFHALGHKCPHYGAPLVKGVLSRGRVRCPWHGACFNISTGDLEDFPGLDSLHKFQVKIEKEKVTIRASKQALQLQRRTKVMAKCISPSAGHSSSTNVLIVGAGAAGLVCAETLRQEGFSDRIVLCTLDRHLPYDRAKLSKSLDAQPEQLALRPKEFFRAYGIEMLTEAQVVTVDVRNKKVVFKDGFKLEYSKLLLAPGSSPKTLTCKGKDVENVFTIRTPEDANRVLRLARGRNAVVVGAGFLGMEVAAYLTEKAHSVSVVELEETPFRRFLGERVGRALMKMFENNRVKFYMQTEVSELRAQEGKLQEVVLKSSKVLRADVCVLGIGAVPATGFLRQSGIGLDSRGFIPVNKMMQTNVPGVFAAGDAVTFPLAWRNNRKVNIPHWQMAHAQGRVAAQNMLAQEAEINTVPYLWTAMFGKSLRYAGYGEGFDDVIIQGDLEELKFVAFYTKSDEVIAVASMNYDPIVSKVAEVLASGRAIRKREVELFMLHSKTGDMSWLTGKGS.

Over residues 18-29 (VLPEKERGKEEL) the composition is skewed to basic and acidic residues. A disordered region spans residues 18 to 44 (VLPEKERGKEELSASGKGSPRGYQGNG). The Rieske domain maps to 70–165 (ATVCHVKDLE…VKIEKEKVTI (96 aa)). [2Fe-2S] cluster-binding residues include C109, H111, C128, and H131. Residues 201–205 (GAGAA), R235, K240, V270, D467, and W514 contribute to the FAD site.

This sequence belongs to the FAD-dependent oxidoreductase family.

The protein resides in the mitochondrion. Its function is as follows. Induces apoptosis through a caspase dependent pathway. Reduces mitochondrial membrane potential. The sequence is that of Apoptosis-inducing factor 3 (Aifm3) from Mus musculus (Mouse).